A 425-amino-acid chain; its full sequence is tRNA(Ile)-lysidine synthase (425 aa).

An ATP-binding site is contributed by 37 to 42; that stretch reads SGGKDS.

This sequence belongs to the tRNA(Ile)-lysidine synthase family.

Its subcellular location is the cytoplasm. The catalysed reaction is cytidine(34) in tRNA(Ile2) + L-lysine + ATP = lysidine(34) in tRNA(Ile2) + AMP + diphosphate + H(+). Ligates lysine onto the cytidine present at position 34 of the AUA codon-specific tRNA(Ile) that contains the anticodon CAU, in an ATP-dependent manner. Cytidine is converted to lysidine, thus changing the amino acid specificity of the tRNA from methionine to isoleucine. This is tRNA(Ile)-lysidine synthase from Leptospira borgpetersenii serovar Hardjo-bovis (strain JB197).